A 467-amino-acid polypeptide reads, in one-letter code: DNA methyltransferase 1-associated protein 1 (467 aa).

Basic and acidic residues-rich tracts occupy residues 1–11 (MATGADVRDIL) and 26–48 (SKKD…LTFK). The disordered stretch occupies residues 1 to 48 (MATGADVRDILELGGPEGDAASGTISKKDIINPDKKKSKKSSETLTFK). A Glycyl lysine isopeptide (Lys-Gly) (interchain with G-Cter in SUMO2) cross-link involves residue lysine 27. The SANT domain maps to 149-199 (DDAWTKAETDHLFDLSRRFDLRFVVIHDRYDHQQFKKRSVEDLKERYYHIC). Lysine 214 is covalently cross-linked (Glycyl lysine isopeptide (Lys-Gly) (interchain with G-Cter in SUMO2)). The stretch at 225 to 275 (RRKEQLERLYNRTPEQVAEEEYLLQELRKIEARKKEREKRSQDLQKLITAA) forms a coiled coil. Over residues 258 to 267 (KKEREKRSQD) the composition is skewed to basic and acidic residues. Disordered regions lie at residues 258 to 305 (KKER…PAVP) and 404 to 467 (LGGP…AKKP). The span at 406-422 (GPATPASGPGPASAEPA) shows a compositional bias: low complexity. Threonine 445 carries the phosphothreonine modification. Serine 448 bears the Phosphoserine mark.

As to quaternary structure, component of the NuA4 histone acetyltransferase complex which contains the catalytic subunit KAT5/TIP60 and the subunits EP400, TRRAP/PAF400, BRD8/SMAP, EPC1, DMAP1/DNMAP1, RUVBL1/TIP49, RUVBL2, ING3, actin, ACTL6A/BAF53A, MORF4L1/MRG15, MORF4L2/MRGX, MRGBP, YEATS4/GAS41, VPS72/YL1 and MEAF6. Component of a NuA4-related complex which contains EP400, TRRAP/PAF400, SRCAP, BRD8/SMAP, EPC1, DMAP1/DNMAP1, RUVBL1/TIP49, RUVBL2, actin, ACTL6A/BAF53A, VPS72 and YEATS4/GAS41. DMAP1 also forms a complex with DNMT1 and HDAC2. Throughout S phase it interacts directly with the N-terminus of DNMT1, which serves to recruit DMAP1 to replication foci. DMAP1 interacts with ING1, a component of the mSin3A transcription repressor complex, although this interaction is not required for recruitment of ING1 to heterochromatin. Interacts directly with the transcriptional corepressor TSG101. Interacts with the pro-apoptotic protein DAXX. Interacts with URI1.

It localises to the nucleus. The protein localises to the cytoplasm. Functionally, involved in transcription repression and activation. Its interaction with HDAC2 may provide a mechanism for histone deacetylation in heterochromatin following replication of DNA at late firing origins. Can also repress transcription independently of histone deacetylase activity. May specifically potentiate DAXX-mediated repression of glucocorticoid receptor-dependent transcription. Component of the NuA4 histone acetyltransferase (HAT) complex which is involved in transcriptional activation of select genes principally by acetylation of nucleosomal histones H4 and H2A. This modification may both alter nucleosome - DNA interactions and promote interaction of the modified histones with other proteins which positively regulate transcription. This complex may be required for the activation of transcriptional programs associated with oncogene and proto-oncogene mediated growth induction, tumor suppressor mediated growth arrest and replicative senescence, apoptosis, and DNA repair. NuA4 may also play a direct role in DNA repair when recruited to sites of DNA damage. Participates in the nuclear localization of URI1 and increases its transcriptional corepressor activity. The chain is DNA methyltransferase 1-associated protein 1 (DMAP1) from Homo sapiens (Human).